Consider the following 153-residue polypeptide: Putative phosphatidylglycerol/phosphatidylinositol transfer protein DDB_G0285639 (153 aa).

Positions 1–21 (MIIKILLLIISISLFLNISIG) are cleaved as a signal peptide. N-linked (GlcNAc...) asparagine glycosylation is found at Asn-17, Asn-61, Asn-87, Asn-117, and Asn-140.

It belongs to the NPC2 family. In terms of assembly, monomer.

Its function is as follows. Catalyzes the intermembrane transfer of phosphatidylglycerol and phosphatidylinositol. The chain is Putative phosphatidylglycerol/phosphatidylinositol transfer protein DDB_G0285639 from Dictyostelium discoideum (Social amoeba).